Reading from the N-terminus, the 704-residue chain is DNA-binding protein RFX2 (704 aa).

Residues methionine 1 to serine 39 are disordered. Low complexity predominate over residues serine 10–alanine 20. Serine 28 carries the post-translational modification Phosphoserine. The RFX-type winged-helix DNA-binding region spans histidine 199 to proline 274. The tract at residues glutamine 292–histidine 334 is disordered. Low complexity predominate over residues threonine 307–histidine 334. Serine 416 is subject to Phosphoserine.

This sequence belongs to the RFX family. Homodimer; probably only forms homodimers in testis. Heterodimer; heterodimerizes with RFX1 and RFX3.

The protein resides in the nucleus. It is found in the cytoplasm. Transcription factor that acts as a key regulator of spermatogenesis. Acts by regulating expression of genes required for the haploid phase during spermiogenesis, such as genes required for cilium assembly and function. Recognizes and binds the X-box, a regulatory motif with DNA sequence 5'-GTNRCC(0-3N)RGYAAC-3' present on promoters. Probably activates transcription of the testis-specific histone gene H1-6. The sequence is that of DNA-binding protein RFX2 (RFX2) from Pongo abelii (Sumatran orangutan).